The following is a 1069-amino-acid chain: Receptor-type guanylate cyclase gcy-29 (1069 aa).

An N-terminal signal peptide occupies residues 1-23 (MLPNFWNFQFIFVIFCWIPIVVS). Residues 24 to 458 (DEKIVLKIGS…FREENCDYTQ (435 aa)) lie on the Extracellular side of the membrane. N-linked (GlcNAc...) asparagine glycans are attached at residues asparagine 161, asparagine 240, and asparagine 407. The helical transmembrane segment at 459–479 (TIVIATAVVCIILTVFLGIWL) threads the bilayer. Over 480-1069 (RRACETSALD…FKKKNNTFDF (590 aa)) the chain is Cytoplasmic. The region spanning 497–806 (RDDVQILDEE…RVRLATEIAL (310 aa)) is the Protein kinase domain. Residues 503-511 (LDEEQVKSV) and lysine 527 each bind ATP. The 131-residue stretch at 876–1006 (TVMFSDIVGF…ETVNIAAVME (131 aa)) folds into the Guanylate cyclase domain. Mg(2+)-binding residues include aspartate 881, isoleucine 882, and aspartate 925.

The protein belongs to the adenylyl cyclase class-4/guanylyl cyclase family. As to expression, expressed bilaterally in ASE and AFD sensory neurons.

It localises to the cell membrane. The catalysed reaction is GTP = 3',5'-cyclic GMP + diphosphate. Functionally, guanylate cyclase involved in the production of the second messenger cGMP. This Caenorhabditis elegans protein is Receptor-type guanylate cyclase gcy-29.